Reading from the N-terminus, the 63-residue chain is Conotoxin Gm5.1 (63 aa).

The signal sequence occupies residues 1 to 21 (MRYLPVFVILLLLIASIPSDT). A propeptide spanning residues 22 to 50 (VQLKTKDDMPLASFHGNGRRILRMLSNKR) is cleaved from the precursor.

Belongs to the conotoxin T superfamily. Post-translationally, contains 2 disulfide bonds that can be either 'C1-C3, C2-C4' or 'C1-C4, C2-C3', since these disulfide connectivities have been observed for conotoxins with cysteine framework V (for examples, see AC P0DQQ7 and AC P81755). In terms of tissue distribution, expressed by the venom duct.

It is found in the secreted. This is Conotoxin Gm5.1 from Conus gloriamaris (Glory-of-the-Sea cone).